The chain runs to 305 residues: Epoxyqueuosine reductase (305 aa).

D128 serves as the catalytic Proton donor. The 4Fe-4S ferredoxin-type domain maps to 170-202 (LSLTSDTPHAKYCGTCRKCLDICPTKAIVHPFV). 8 residues coordinate [4Fe-4S] cluster: C182, C185, C188, C192, C208, C236, C239, and C243.

The protein belongs to the QueG family. In terms of assembly, monomer. The cofactor is cob(II)alamin. [4Fe-4S] cluster is required as a cofactor.

The protein localises to the cytoplasm. It carries out the reaction epoxyqueuosine(34) in tRNA + AH2 = queuosine(34) in tRNA + A + H2O. It participates in tRNA modification; tRNA-queuosine biosynthesis. In terms of biological role, catalyzes the conversion of epoxyqueuosine (oQ) to queuosine (Q), which is a hypermodified base found in the wobble positions of tRNA(Asp), tRNA(Asn), tRNA(His) and tRNA(Tyr). The chain is Epoxyqueuosine reductase from Atelocyanobacterium thalassa (isolate ALOHA).